Here is a 466-residue protein sequence, read N- to C-terminus: Ribulose bisphosphate carboxylase large chain (466 aa).

Position 5 is an N6,N6,N6-trimethyllysine (Lys5). Residues Asn114 and Thr164 each coordinate substrate. Lys166 functions as the Proton acceptor in the catalytic mechanism. Lys168 contacts substrate. Mg(2+) is bound by residues Lys192, Asp194, and Glu195. Lys192 carries the N6-carboxylysine modification. His285 (proton acceptor) is an active-site residue. Substrate is bound by residues Arg286, His318, and Ser370.

This sequence belongs to the RuBisCO large chain family. Type I subfamily. Heterohexadecamer of 8 large chains and 8 small chains; disulfide-linked. The disulfide link is formed within the large subunit homodimers. Mg(2+) serves as cofactor. The disulfide bond which can form in the large chain dimeric partners within the hexadecamer appears to be associated with oxidative stress and protein turnover.

It localises to the plastid. It is found in the chloroplast. The enzyme catalyses 2 (2R)-3-phosphoglycerate + 2 H(+) = D-ribulose 1,5-bisphosphate + CO2 + H2O. It catalyses the reaction D-ribulose 1,5-bisphosphate + O2 = 2-phosphoglycolate + (2R)-3-phosphoglycerate + 2 H(+). In terms of biological role, ruBisCO catalyzes two reactions: the carboxylation of D-ribulose 1,5-bisphosphate, the primary event in carbon dioxide fixation, as well as the oxidative fragmentation of the pentose substrate in the photorespiration process. Both reactions occur simultaneously and in competition at the same active site. The protein is Ribulose bisphosphate carboxylase large chain of Adoxa moschatellina (Moschatel).